A 420-amino-acid polypeptide reads, in one-letter code: 3-isopropylmalate dehydratase large subunit (420 aa).

Residues Cys300, Cys360, and Cys363 each coordinate [4Fe-4S] cluster.

This sequence belongs to the aconitase/IPM isomerase family. LeuC type 2 subfamily. Heterodimer of LeuC and LeuD. It depends on [4Fe-4S] cluster as a cofactor.

The enzyme catalyses (2R,3S)-3-isopropylmalate = (2S)-2-isopropylmalate. Its pathway is amino-acid biosynthesis; L-leucine biosynthesis; L-leucine from 3-methyl-2-oxobutanoate: step 2/4. In terms of biological role, catalyzes the isomerization between 2-isopropylmalate and 3-isopropylmalate, via the formation of 2-isopropylmaleate. The chain is 3-isopropylmalate dehydratase large subunit from Halothermothrix orenii (strain H 168 / OCM 544 / DSM 9562).